The sequence spans 119 residues: Protein TusC (119 aa).

It belongs to the DsrF/TusC family. As to quaternary structure, heterohexamer, formed by a dimer of trimers. The hexameric TusBCD complex contains 2 copies each of TusB, TusC and TusD. The TusBCD complex interacts with TusE.

The protein localises to the cytoplasm. Part of a sulfur-relay system required for 2-thiolation of 5-methylaminomethyl-2-thiouridine (mnm(5)s(2)U) at tRNA wobble positions. This chain is Protein TusC, found in Escherichia coli O8 (strain IAI1).